The primary structure comprises 790 residues: Pre-mRNA-splicing factor cwf3 (790 aa).

HAT repeat units follow at residues 12-44 (DLIN…THEG), 45-77 (STLE…LRVA), 89-121 (EAFA…FLMK), 123-157 (PNVT…YAED), 159-190 (GGLF…KLGL), 193-228 (EAAR…LVVQ), 233-266 (TQNI…YYIR), 268-303 (GDYE…FEEQ), 331-364 (KILD…FLED), 368-402 (KVVQ…FYEN), 404-440 (DDLE…MELR), 457-492 (APRK…LEES), 494-526 (GTIE…LLEE), 528-562 (AYFE…KFVK), 567-601 (THME…FEEK), 639-673 (YGVL…METK), and 675-709 (GEID…FEIR). The tract at residues 769–790 (LAGFVLSKSNPQETSKITGEEN) is disordered. The segment covering 775 to 790 (SKSNPQETSKITGEEN) has biased composition (polar residues).

The protein belongs to the crooked-neck family. Belongs to the 40S cdc5-associated complex (or cwf complex), a spliceosome sub-complex reminiscent of a late-stage spliceosome composed of the U2, U5 and U6 snRNAs and at least brr2, cdc5, cwf2/prp3, cwf3/syf1, cwf4/syf3, cwf5/ecm2, spp42/cwf6, cwf7/spf27, cwf8, cwf9, cwf10, cwf11, cwf12, prp45/cwf13, cwf14, cwf15, cwf16, cwf17, cwf18, cwf19, cwf20, cwf21, cwf22, cwf23, cwf24, cwf25, cwf26, cyp7/cwf27, cwf28, cwf29/ist3, lea1, msl1, prp5/cwf1, prp10, prp12/sap130, prp17, prp22, sap61, sap62, sap114, sap145, slu7, smb1, smd1, smd3, smf1, smg1 and syf2.

The protein localises to the nucleus. Its function is as follows. Involved in pre-mRNA splicing and cell cycle progression. The protein is Pre-mRNA-splicing factor cwf3 (cwf3) of Schizosaccharomyces pombe (strain 972 / ATCC 24843) (Fission yeast).